The sequence spans 498 residues: Oligopeptide transport system permease protein AmiC (498 aa).

6 consecutive transmembrane segments (helical) span residues 12–32 (SLVS…TLVP), 279–299 (MIVS…ALAV), 316–336 (LSTG…VYIV), 359–379 (SYVL…AIWI), 415–435 (MVPL…GATL), and 461–481 (VVGL…LGDI). One can recognise an ABC transmembrane type-1 domain in the interval 280–479 (IVSSAITGLI…CISIFSRLLG (200 aa)).

It belongs to the binding-protein-dependent transport system permease family. OppBC subfamily.

The protein resides in the cell membrane. Part of the binding-protein-dependent transport system for oligopeptides; probably responsible for the translocation of the substrate across the membrane. In Streptococcus pneumoniae serotype 4 (strain ATCC BAA-334 / TIGR4), this protein is Oligopeptide transport system permease protein AmiC (amiC).